Here is a 436-residue protein sequence, read N- to C-terminus: F-box/LRR-repeat protein 20 (436 aa).

Residues 22-68 (AVINKKLPKELLLRIFSFLDVVTLCRCAQVSRAWNVLALDGSNWQRI) form the F-box domain. 13 LRR repeats span residues 74-100 (QRDIEGRVVENISKRCGGFLRKLSLRG), 101-126 (CLGVGDNALRTFAQNCRNIEVLNLNG), 127-152 (CTKTTDATCTSLSKFCSKLRHLDLAS), 153-178 (CTSITNMSLKALSEGCPLLEQLNISW), 179-204 (CDQVTKDGIQALVRGCGGLKALFLKG), 205-230 (CTQLEDEALKYIGAHCPELVTLNLQT), 231-256 (CLQITDEGLITICRGCHKLQSLCASG), 257-282 (CSNITDAILNALGQNCPRLRILEVAR), 283-308 (CSQLTDVGFTTLARNCHELEKMDLEE), 309-334 (CVQITDSTLIQLSIHCPRLQVLSLSH), 335-363 (CELITDDGIRHLGNGACAHDQLEVIELDN), 364-388 (CPLITDASLEHLKSCHSLERIELYD), and 389-414 (CQQITRAGIKRLRTHLPNIKVHAYFA). At T417 the chain carries Phosphothreonine. Position 421 is a phosphoserine (S421).

In terms of assembly, interacts with SKP1 and CUL1.

The protein localises to the cytoplasm. Functionally, substrate-recognition component of the SCF (SKP1-CUL1-F-box protein)-type E3 ubiquitin ligase complex. Role in neural transmission. In Bos taurus (Bovine), this protein is F-box/LRR-repeat protein 20 (FBXL20).